The chain runs to 512 residues: 2,3-bisphosphoglycerate-independent phosphoglycerate mutase (512 aa).

Mn(2+) contacts are provided by aspartate 12 and serine 62. Catalysis depends on serine 62, which acts as the Phosphoserine intermediate. Substrate contacts are provided by residues histidine 123, 153–154, arginine 185, arginine 191, 260–263, and lysine 333; these read RD and RPDR. The Mn(2+) site is built by aspartate 400, histidine 404, aspartate 441, histidine 442, and histidine 460.

It belongs to the BPG-independent phosphoglycerate mutase family. Monomer. Mn(2+) is required as a cofactor.

It catalyses the reaction (2R)-2-phosphoglycerate = (2R)-3-phosphoglycerate. The protein operates within carbohydrate degradation; glycolysis; pyruvate from D-glyceraldehyde 3-phosphate: step 3/5. Functionally, catalyzes the interconversion of 2-phosphoglycerate and 3-phosphoglycerate. This Clostridium perfringens (strain ATCC 13124 / DSM 756 / JCM 1290 / NCIMB 6125 / NCTC 8237 / Type A) protein is 2,3-bisphosphoglycerate-independent phosphoglycerate mutase.